A 1406-amino-acid polypeptide reads, in one-letter code: Inactive tyrosine-protein kinase PRAG1 (1406 aa).

Phosphoserine is present on S148. Residues 184 to 193 (EEKAVHKEKP) show a composition bias toward basic and acidic residues. Disordered regions lie at residues 184 to 205 (EEKA…STQE) and 217 to 248 (TTSG…SGDS). Phosphotyrosine is present on residues Y253, Y365, and Y413. Disordered stretches follow at residues 372-470 (PAPE…TPQV) and 484-854 (DHRT…HSET). Residues 526–542 (RESHAHSASESKPKERP) show a composition bias toward basic and acidic residues. The segment covering 546–576 (PKLSKSSPVGSPVSPSAGGPPVSPLADLSDG) has biased composition (low complexity). Composition is skewed to polar residues over residues 660-671 (NGPTDHSNSTTW) and 678-695 (DGSS…SKSA). A phosphoserine mark is found at S696 and S745. Polar residues-rich tracts occupy residues 737 to 746 (SQGSAESLSP) and 754 to 770 (SFTT…SRTC). At S782 the chain carries Phosphoserine. Residues 798 to 808 (SGSTEDVSPSG) show a composition bias toward polar residues. S826 carries the phosphoserine modification. The segment at 933–976 (STQLQLHGLLSNISSKEGTYAKLGGLYTQSLARLVAKCEDLFMG) is required for homodimerization. Residues 978 to 1329 (QKKELHFNEN…EAKRVLQCLL (352 aa)) enclose the Protein kinase domain. The span at 1163-1173 (GPAPAPAPAPA) shows a compositional bias: pro residues. The segment at 1163 to 1206 (GPAPAPAPAPAPAAAAPPCSSAAPPAGGTLSPAAGPASPEGPRE) is disordered. Positions 1174-1202 (PAAAAPPCSSAAPPAGGTLSPAAGPASPE) are enriched in low complexity. A required for homodimerization region spans residues 1331–1406 (GPRRELVQQP…LQSLKLLQLL (76 aa)).

This sequence belongs to the protein kinase superfamily. Homodimer. Dimerization leads to the catalytic activation of CSK. Interacts (via C-terminus) with RND2. Interacts with CSK (via SH2 domain) in a Tyr-413 phosphorylation-dependent manner; this interaction potentiates kinase activity of CSK. Interacts with PEAK1. Interacts with NOTCH1 intracellular domain (N1ICD). Forms a complex with N1ICD and MAML1, in a MAML1-dependent manner. In terms of processing, phosphorylated by CSK on Tyr-253, Tyr-365, and Tyr-413; Tyr-413 is a primary site of phosphorylation.

Its subcellular location is the cytoplasm. It is found in the cell junction. The protein resides in the focal adhesion. The protein localises to the nucleus. Functionally, catalytically inactive protein kinase that acts as a scaffold protein. Functions as an effector of the small GTPase RND2, which stimulates RhoA activity and inhibits NGF-induced neurite outgrowth. Promotes Src family kinase (SFK) signaling by regulating the subcellular localization of CSK, a negative regulator of these kinases, leading to the regulation of cell morphology and motility by a CSK-dependent mechanism. Acts as a critical coactivator of Notch signaling. This chain is Inactive tyrosine-protein kinase PRAG1, found in Homo sapiens (Human).